We begin with the raw amino-acid sequence, 286 residues long: D-tagatose-1,6-bisphosphate aldolase subunit KbaY (286 aa).

Residue Asp-82 is the Proton donor of the active site. 2 residues coordinate Zn(2+): His-83 and His-180. Residue Gly-181 coordinates dihydroxyacetone phosphate. His-208 lines the Zn(2+) pocket. Dihydroxyacetone phosphate-binding positions include 209 to 211 (GAS) and 230 to 233 (NVAT).

Belongs to the class II fructose-bisphosphate aldolase family. TagBP aldolase KbaY subfamily. In terms of assembly, homotetramer. Forms a complex with KbaZ. The cofactor is Zn(2+).

The enzyme catalyses D-tagatofuranose 1,6-bisphosphate = D-glyceraldehyde 3-phosphate + dihydroxyacetone phosphate. Its pathway is carbohydrate metabolism; D-tagatose 6-phosphate degradation; D-glyceraldehyde 3-phosphate and glycerone phosphate from D-tagatose 6-phosphate: step 2/2. In terms of biological role, catalytic subunit of the tagatose-1,6-bisphosphate aldolase KbaYZ, which catalyzes the reversible aldol condensation of dihydroxyacetone phosphate (DHAP or glycerone-phosphate) with glyceraldehyde 3-phosphate (G3P) to produce tagatose 1,6-bisphosphate (TBP). Requires KbaZ subunit for full activity and stability. The sequence is that of D-tagatose-1,6-bisphosphate aldolase subunit KbaY from Escherichia coli O127:H6 (strain E2348/69 / EPEC).